The following is a 266-amino-acid chain: GFP-like fluorescent chromoprotein cFP484 (266 aa).

The 2-iminomethyl-5-imidazolinone (Gln-Gly) cross-link spans 104 to 106 (QYG). At Y105 the chain carries 2,3-didehydrotyrosine.

It belongs to the GFP family. In terms of processing, contains a chromophore consisting of modified amino acid residues. The chromophore is formed by autocatalytic backbone condensation between Xaa-N and Gly-(N+2), oxidation of Tyr-(N+1) to didehydrotyrosine, and formation of a double bond to the alpha-amino nitrogen of residue Xaa-N. Maturation of the chromophore requires nothing other than molecular oxygen. The precise stereochemistry of the tyrosine has not been determined. In terms of tissue distribution, tentacle and oral disk.

Its function is as follows. Pigment protein that is green in color. This Clavularia sp. (Brown star polyp) protein is GFP-like fluorescent chromoprotein cFP484.